Consider the following 311-residue polypeptide: Cytosolic Fe-S cluster assembly factor Nubp1 homolog (311 aa).

Residues C9, C23, C26, and C32 each coordinate [4Fe-4S] cluster. Residue 63 to 70 (GKGGVGKS) participates in ATP binding. Positions 240 and 243 each coordinate [4Fe-4S] cluster.

It belongs to the Mrp/NBP35 ATP-binding proteins family. NUBP1/NBP35 subfamily. Heterotetramer of 2 Nubp1 and 2 Nubp2 chains. Requires [4Fe-4S] cluster as cofactor.

It is found in the cytoplasm. Functionally, component of the cytosolic iron-sulfur (Fe/S) protein assembly (CIA) machinery. Required for maturation of extramitochondrial Fe-S proteins. The Nubp1-Nubp2 heterotetramer forms a Fe-S scaffold complex, mediating the de novo assembly of an Fe-S cluster and its transfer to target apoproteins. The chain is Cytosolic Fe-S cluster assembly factor Nubp1 homolog from Drosophila yakuba (Fruit fly).